Reading from the N-terminus, the 308-residue chain is Ferredoxin--NADP reductase (308 aa).

FAD-binding residues include E26, Q34, Y39, V77, F106, D266, and T306.

The protein belongs to the ferredoxin--NADP reductase type 2 family. Homodimer. The cofactor is FAD.

It catalyses the reaction 2 reduced [2Fe-2S]-[ferredoxin] + NADP(+) + H(+) = 2 oxidized [2Fe-2S]-[ferredoxin] + NADPH. The protein is Ferredoxin--NADP reductase of Lactobacillus delbrueckii subsp. bulgaricus (strain ATCC 11842 / DSM 20081 / BCRC 10696 / JCM 1002 / NBRC 13953 / NCIMB 11778 / NCTC 12712 / WDCM 00102 / Lb 14).